We begin with the raw amino-acid sequence, 490 residues long: Aspartyl/glutamyl-tRNA(Asn/Gln) amidotransferase subunit B (490 aa).

Belongs to the GatB/GatE family. GatB subfamily. Heterotrimer of A, B and C subunits.

It carries out the reaction L-glutamyl-tRNA(Gln) + L-glutamine + ATP + H2O = L-glutaminyl-tRNA(Gln) + L-glutamate + ADP + phosphate + H(+). The enzyme catalyses L-aspartyl-tRNA(Asn) + L-glutamine + ATP + H2O = L-asparaginyl-tRNA(Asn) + L-glutamate + ADP + phosphate + 2 H(+). Its function is as follows. Allows the formation of correctly charged Asn-tRNA(Asn) or Gln-tRNA(Gln) through the transamidation of misacylated Asp-tRNA(Asn) or Glu-tRNA(Gln) in organisms which lack either or both of asparaginyl-tRNA or glutaminyl-tRNA synthetases. The reaction takes place in the presence of glutamine and ATP through an activated phospho-Asp-tRNA(Asn) or phospho-Glu-tRNA(Gln). The protein is Aspartyl/glutamyl-tRNA(Asn/Gln) amidotransferase subunit B of Prochlorococcus marinus subsp. pastoris (strain CCMP1986 / NIES-2087 / MED4).